A 590-amino-acid chain; its full sequence is Proline--tRNA ligase (590 aa).

This sequence belongs to the class-II aminoacyl-tRNA synthetase family. ProS type 1 subfamily. Homodimer.

It is found in the cytoplasm. It catalyses the reaction tRNA(Pro) + L-proline + ATP = L-prolyl-tRNA(Pro) + AMP + diphosphate. In terms of biological role, catalyzes the attachment of proline to tRNA(Pro) in a two-step reaction: proline is first activated by ATP to form Pro-AMP and then transferred to the acceptor end of tRNA(Pro). As ProRS can inadvertently accommodate and process non-cognate amino acids such as alanine and cysteine, to avoid such errors it has two additional distinct editing activities against alanine. One activity is designated as 'pretransfer' editing and involves the tRNA(Pro)-independent hydrolysis of activated Ala-AMP. The other activity is designated 'posttransfer' editing and involves deacylation of mischarged Ala-tRNA(Pro). The misacylated Cys-tRNA(Pro) is not edited by ProRS. This Clavibacter sepedonicus (Clavibacter michiganensis subsp. sepedonicus) protein is Proline--tRNA ligase.